A 246-amino-acid chain; its full sequence is NAD-dependent protein deacylase (246 aa).

The region spanning 1 to 245 (MKEFITKHRD…ELIREILDNP (245 aa)) is the Deacetylase sirtuin-type domain. 20–39 (GAGISAESGIPTFRGSEGLW) provides a ligand contact to NAD(+). Positions 64 and 67 each coordinate substrate. Residue 98–101 (QNVD) coordinates NAD(+). The Proton acceptor role is filled by histidine 116. Cysteine 124, cysteine 127, cysteine 146, and cysteine 149 together coordinate Zn(2+). NAD(+)-binding positions include 186 to 188 (GTS), 212 to 214 (NPE), and threonine 230.

The protein belongs to the sirtuin family. Class III subfamily. Requires Zn(2+) as cofactor.

It localises to the cytoplasm. It carries out the reaction N(6)-acetyl-L-lysyl-[protein] + NAD(+) + H2O = 2''-O-acetyl-ADP-D-ribose + nicotinamide + L-lysyl-[protein]. It catalyses the reaction N(6)-succinyl-L-lysyl-[protein] + NAD(+) + H2O = 2''-O-succinyl-ADP-D-ribose + nicotinamide + L-lysyl-[protein]. Functionally, NAD-dependent lysine deacetylase and desuccinylase that specifically removes acetyl and succinyl groups on target proteins. Modulates the activities of several proteins which are inactive in their acylated form. This is NAD-dependent protein deacylase from Leptospira interrogans serogroup Icterohaemorrhagiae serovar copenhageni (strain Fiocruz L1-130).